The chain runs to 268 residues: Tryptophan synthase alpha chain (268 aa).

Active-site proton acceptor residues include Glu-49 and Asp-60.

This sequence belongs to the TrpA family. Tetramer of two alpha and two beta chains.

It carries out the reaction (1S,2R)-1-C-(indol-3-yl)glycerol 3-phosphate + L-serine = D-glyceraldehyde 3-phosphate + L-tryptophan + H2O. Its pathway is amino-acid biosynthesis; L-tryptophan biosynthesis; L-tryptophan from chorismate: step 5/5. Its function is as follows. The alpha subunit is responsible for the aldol cleavage of indoleglycerol phosphate to indole and glyceraldehyde 3-phosphate. This chain is Tryptophan synthase alpha chain, found in Escherichia coli O1:K1 / APEC.